The primary structure comprises 341 residues: Pectate trisaccharide-lyase (341 aa).

An N-terminal signal peptide occupies residues 1 to 27 (MKKLISIIFIFVLGVVGSLTAAVSAEA). Residues 28–39 (ASALNSGKVNPL) constitute a propeptide that is removed on maturation. 2 PbH1 repeats span residues 131–156 (ANNIIIRNLKIHEVASGDKDAIGIEG) and 158–186 (SKNIWVDHNELYHSLNVDKDYYDGLFDVK). D150, D180, and D184 together coordinate Ca(2+). R233 is a catalytic residue. PbH1 repeat units lie at residues 262-283 (GARIRIENNLFENAKDPIVSWY) and 287-322 (PGYWHVSNNKFVNSRGSMPTTSTTTYNPPYSYSLDN).

The protein belongs to the polysaccharide lyase 1 family. Ca(2+) is required as a cofactor.

The protein localises to the secreted. It catalyses the reaction eliminative cleavage of unsaturated trigalacturonate as the major product from the reducing end of polygalacturonic acid/pectate.. In terms of biological role, cleaves unsaturated oligo-galacturonides from pectin. The major product is trigalacturonate; digalacturonate and tetragalacturonate are also produced. Activity on methylated pectins decreases with an increasing degree of methylation. The sequence is that of Pectate trisaccharide-lyase from Bacillus licheniformis (strain ATCC 14580 / DSM 13 / JCM 2505 / CCUG 7422 / NBRC 12200 / NCIMB 9375 / NCTC 10341 / NRRL NRS-1264 / Gibson 46).